The chain runs to 445 residues: FAS-associated factor 2 (445 aa).

An N-acetylalanine modification is found at A2. The UBA domain maps to 12-48 (EQTEKLLQFQDLTGIESMEQCRLALEQHNWNMEAAVQ). Position 167 is an N6-acetyllysine (K167). The stretch at 275–350 (SERLEREERN…EEKERKLECL (76 aa)) forms a coiled coil. Positions 300-361 (SLRADQEKER…PEPSPDDPES (62 aa)) are disordered. Residues 303–348 (ADQEKERKKREEKERKRRKEEEVQQQKLAEERRRQNLQEEKERKLE) are compositionally biased toward basic and acidic residues. The UBX domain maps to 357-439 (DDPESVKIIF…GLSHTEVLFV (83 aa)).

As to quaternary structure, identified in a complex that contains SEL1L, OS9, FAF2/UBXD8, UBE2J1/UBC6E and AUP1. Interacts with YOD1. Interacts (via N-terminus) with UBQLN2 (via C-terminus). Interacts with PNPLA2. Interacts with ZFAND2B; probably through VCP. Interacts with LMBR1L and UBAC2.

It localises to the cytoplasm. It is found in the lipid droplet. The protein resides in the endoplasmic reticulum. Its function is as follows. Plays an important role in endoplasmic reticulum-associated degradation (ERAD) that mediates ubiquitin-dependent degradation of misfolded endoplasmic reticulum proteins. By controlling the steady-state expression of the IGF1R receptor, indirectly regulates the insulin-like growth factor receptor signaling pathway. Involved in inhibition of lipid droplet degradation by binding to phospholipase PNPL2 and inhibiting its activity by promoting dissociation of PNPL2 from its endogenous activator, ABHD5 which inhibits the rate of triacylglycerol hydrolysis. Involved in stress granule disassembly: associates with ubiquitinated G3BP1 in response to heat shock, thereby promoting interaction between ubiquitinated G3BP1 and VCP, followed by G3BP1 extraction from stress granules and stress granule disassembly. The chain is FAS-associated factor 2 (Faf2) from Mus musculus (Mouse).